The primary structure comprises 346 residues: Phosphoribosylformylglycinamidine cyclo-ligase (346 aa).

This sequence belongs to the AIR synthase family.

The protein localises to the cytoplasm. The catalysed reaction is 2-formamido-N(1)-(5-O-phospho-beta-D-ribosyl)acetamidine + ATP = 5-amino-1-(5-phospho-beta-D-ribosyl)imidazole + ADP + phosphate + H(+). The protein operates within purine metabolism; IMP biosynthesis via de novo pathway; 5-amino-1-(5-phospho-D-ribosyl)imidazole from N(2)-formyl-N(1)-(5-phospho-D-ribosyl)glycinamide: step 2/2. This Erwinia tasmaniensis (strain DSM 17950 / CFBP 7177 / CIP 109463 / NCPPB 4357 / Et1/99) protein is Phosphoribosylformylglycinamidine cyclo-ligase.